The sequence spans 237 residues: Ribosomal RNA small subunit methyltransferase G (237 aa).

S-adenosyl-L-methionine contacts are provided by residues Gly-78, Phe-83, 129–130 (AE), and Arg-148. Residues 218–237 (KKETPNKYPRKAGMPNKRPL) form a disordered region.

The protein belongs to the methyltransferase superfamily. RNA methyltransferase RsmG family.

It is found in the cytoplasm. In terms of biological role, specifically methylates the N7 position of a guanine in 16S rRNA. The sequence is that of Ribosomal RNA small subunit methyltransferase G from Streptococcus pneumoniae serotype 19F (strain G54).